The primary structure comprises 156 residues: Small ribosomal subunit protein uS7 (156 aa).

Belongs to the universal ribosomal protein uS7 family. Part of the 30S ribosomal subunit. Contacts proteins S9 and S11.

Functionally, one of the primary rRNA binding proteins, it binds directly to 16S rRNA where it nucleates assembly of the head domain of the 30S subunit. Is located at the subunit interface close to the decoding center, probably blocks exit of the E-site tRNA. The chain is Small ribosomal subunit protein uS7 from Rhizobium rhizogenes (strain K84 / ATCC BAA-868) (Agrobacterium radiobacter).